The following is a 498-amino-acid chain: Capsanthin/capsorubin synthase, chromoplastic (498 aa).

The N-terminal 52 residues, 1–52 (METLLKPFPSPLLSIPTPNMYSFKHNSTFPNPTKQKDSRKFHYRNKSSTHFC), are a transit peptide targeting the chromoplast. 84-112 (VIIIGTGPAGLRLAEQVSKYGIKVCCVDP) serves as a coordination point for NAD(+). Positions 293–297 (FLEET) match the FLEET motif motif.

Belongs to the lycopene cyclase family. As to quaternary structure, monomer. The cofactor is FAD. It depends on NADPH as a cofactor.

It localises to the plastid. It is found in the chromoplast. It carries out the reaction all-trans-violaxanthin = all-trans-capsorubin. The catalysed reaction is all-trans-antheraxanthin = all-trans-capsanthin. It catalyses the reaction all-trans-violaxanthin = (5R,6S)-5,6-epoxi-capsanthin. The enzyme catalyses (5R,6S)-5,6-epoxi-capsanthin = all-trans-capsorubin. It participates in carotenoid biosynthesis; capsanthin biosynthesis; capsanthin from antheraxanthin: step 1/1. The protein operates within carotenoid biosynthesis; capsorubin biosynthesis; capsorubin from violaxanthin: step 1/1. Catalyzes the conversion of the ubiquitous 5,6-epoxycarotenoids, antheraxanthin and violaxanthin, into capsanthin and capsorubin, respectively. In Capsicum annuum (Capsicum pepper), this protein is Capsanthin/capsorubin synthase, chromoplastic.